The following is a 515-amino-acid chain: BURP domain-containing protein 9 (515 aa).

Residues 1 to 29 (MKATGGPLPLILFLLIIIVLITAQHTAIA) form the signal peptide. Residues 292-507 (YFFEDNLAPG…GRGSIIWVPV (216 aa)) form the BURP domain. Residues Asn-321, Asn-332, and Asn-470 are each glycosylated (N-linked (GlcNAc...) asparagine).

In terms of tissue distribution, expressed in shoot and panicles.

The sequence is that of BURP domain-containing protein 9 (BURP9) from Oryza sativa subsp. japonica (Rice).